Reading from the N-terminus, the 309-residue chain is uncharacterized protein (309 aa).

This is an uncharacterized protein from Aquifex aeolicus (strain VF5).